A 344-amino-acid chain; its full sequence is Anthranilate phosphoribosyltransferase (344 aa).

Residues Gly-80, 83–84, Thr-88, 90–93, 108–116, and Ser-120 each bind 5-phospho-alpha-D-ribose 1-diphosphate; these read GD, NVST, and KHGNRSVSS. Gly-80 contributes to the anthranilate binding site. Ser-92 lines the Mg(2+) pocket. Asn-111 serves as a coordination point for anthranilate. Residue Arg-166 participates in anthranilate binding. Mg(2+) is bound by residues Asp-225 and Glu-226.

It belongs to the anthranilate phosphoribosyltransferase family. As to quaternary structure, homodimer. Mg(2+) is required as a cofactor.

The enzyme catalyses N-(5-phospho-beta-D-ribosyl)anthranilate + diphosphate = 5-phospho-alpha-D-ribose 1-diphosphate + anthranilate. It functions in the pathway amino-acid biosynthesis; L-tryptophan biosynthesis; L-tryptophan from chorismate: step 2/5. Its function is as follows. Catalyzes the transfer of the phosphoribosyl group of 5-phosphorylribose-1-pyrophosphate (PRPP) to anthranilate to yield N-(5'-phosphoribosyl)-anthranilate (PRA). The protein is Anthranilate phosphoribosyltransferase of Legionella pneumophila (strain Paris).